A 192-amino-acid polypeptide reads, in one-letter code: Ion-translocating oxidoreductase complex subunit B (192 aa).

Residues 1 to 26 (MNAIWIAVAAVSLLGLAFGAILGYAS) are hydrophobic. One can recognise a 4Fe-4S domain in the interval 32 to 91 (EDDPVVEKIDEILPQSQCGQCGYPGCRPYAEAISCNGEKINRCAPGGEAVMLKIAELLNV). Residues C49, C52, C57, C74, C117, C120, C123, C127, C147, C150, C153, and C157 each coordinate [4Fe-4S] cluster. 4Fe-4S ferredoxin-type domains follow at residues 108 to 137 (MVAV…GATR) and 138 to 167 (VMHT…LQPV).

It belongs to the 4Fe4S bacterial-type ferredoxin family. RnfB subfamily. In terms of assembly, the complex is composed of six subunits: RsxA, RsxB, RsxC, RsxD, RsxE and RsxG. Requires [4Fe-4S] cluster as cofactor.

The protein resides in the cell inner membrane. Part of a membrane-bound complex that couples electron transfer with translocation of ions across the membrane. Required to maintain the reduced state of SoxR. In Shigella boydii serotype 4 (strain Sb227), this protein is Ion-translocating oxidoreductase complex subunit B.